The primary structure comprises 57 residues: Andropin (57 aa).

The first 23 residues, 1–23, serve as a signal peptide directing secretion; the sequence is MKYFVVLVVLALILAITVGPSDA.

This sequence belongs to the andropin family. As to expression, ejaculatory duct of adult males.

It is found in the secreted. In terms of biological role, male-specific peptide with moderate activity against Gram-positive bacteria. The chain is Andropin (Anp) from Drosophila mauritiana (Fruit fly).